The chain runs to 75 residues: UPF0352 protein YejL (75 aa).

It belongs to the UPF0352 family.

In Salmonella agona (strain SL483), this protein is UPF0352 protein YejL.